The chain runs to 61 residues: Small ribosomal subunit protein uS14 (61 aa).

Residues Cys24, Cys27, Cys40, and Cys43 each coordinate Zn(2+).

It belongs to the universal ribosomal protein uS14 family. Zinc-binding uS14 subfamily. In terms of assembly, part of the 30S ribosomal subunit. Contacts proteins S3 and S10. Requires Zn(2+) as cofactor.

Its function is as follows. Binds 16S rRNA, required for the assembly of 30S particles and may also be responsible for determining the conformation of the 16S rRNA at the A site. The chain is Small ribosomal subunit protein uS14 from Borrelia hermsii (strain HS1 / DAH).